The chain runs to 361 residues: Deoxyribonuclease (361 aa).

An N-terminal signal peptide occupies residues 1-24; the sequence is MMHLLRRGAFAILLIVLLPSAALA. H149 is a catalytic residue.

Belongs to the DNase I family. The cofactor is Mg(2+). It depends on Ca(2+) as a cofactor.

It is found in the secreted. In terms of biological role, DNA nuclease able to digest short and long DNA substrate. Is resistant to ionic strength and thus active at high salt concentration. This Thioalkalivibrio sp. (strain K90mix) protein is Deoxyribonuclease.